We begin with the raw amino-acid sequence, 504 residues long: Arabinose import ATP-binding protein AraG (504 aa).

ABC transporter domains lie at 8 to 243 (LSFR…MVGR) and 256 to 499 (YGEE…MPKV). 40-47 (GENGAGKS) is an ATP binding site.

This sequence belongs to the ABC transporter superfamily. Arabinose importer (TC 3.A.1.2.2) family. In terms of assembly, the complex is composed of two ATP-binding proteins (AraG), two transmembrane proteins (AraH) and a solute-binding protein (AraF).

It is found in the cell inner membrane. It carries out the reaction L-arabinose(out) + ATP + H2O = L-arabinose(in) + ADP + phosphate + H(+). Part of the ABC transporter complex AraFGH involved in arabinose import. Responsible for energy coupling to the transport system. The polypeptide is Arabinose import ATP-binding protein AraG (Escherichia coli O157:H7).